Reading from the N-terminus, the 711-residue chain is Polyribonucleotide nucleotidyltransferase (711 aa).

Mg(2+)-binding residues include Asp-486 and Asp-492. The region spanning 553–612 (PRIHTIKINPDKIKDVIGKGGSVIRALTEETGTTIEIEDDGTVKIAATDGDKAQHAIRRI) is the KH domain. The region spanning 622–690 (GRIYNGKVTR…RQGRVRLSIK (69 aa)) is the S1 motif domain. Positions 689 to 711 (IKEATEQTPSAAAPEAPAAEQGE) are disordered. Over residues 694-711 (EQTPSAAAPEAPAAEQGE) the composition is skewed to low complexity.

Belongs to the polyribonucleotide nucleotidyltransferase family. In terms of assembly, component of the RNA degradosome, which is a multiprotein complex involved in RNA processing and mRNA degradation. The cofactor is Mg(2+).

It is found in the cytoplasm. It carries out the reaction RNA(n+1) + phosphate = RNA(n) + a ribonucleoside 5'-diphosphate. In terms of biological role, involved in mRNA degradation. Catalyzes the phosphorolysis of single-stranded polyribonucleotides processively in the 3'- to 5'-direction. This chain is Polyribonucleotide nucleotidyltransferase, found in Klebsiella pneumoniae subsp. pneumoniae (strain ATCC 700721 / MGH 78578).